Reading from the N-terminus, the 252-residue chain is Protein Flattop homolog (252 aa).

The segment at 177–252 (TEKRRRKRTI…EKERKAAKGH (76 aa)) is disordered. The segment covering 218 to 252 (PKDKPKDKPKDKEAGKKDKTKDKGKEKERKAAKGH) has biased composition (basic and acidic residues).

The protein belongs to the Flattop family.

This Drosophila melanogaster (Fruit fly) protein is Protein Flattop homolog.